The chain runs to 322 residues: AB hydrolase superfamily protein FGSG_00044 (322 aa).

In terms of domain architecture, AB hydrolase-1 spans 36-319; sequence RTTPKQPVAI…ITAEVRRIVK (284 aa).

Belongs to the AB hydrolase superfamily.

The protein operates within mycotoxin biosynthesis. AB hydrolase superfamily protein; part of the gene cluster that mediates the biosynthesis of gramillins A and B, bicyclic lipopeptides that induce cell death in maize leaves but not in wheat leaves. The nonribosomal peptide synthetase GRA1 incorporates respectively a glutamic adic (Glu), a leucine (Leu), a serine (Ser), a hydroxyglutamine (HOGln), a 2-amino decanoic acid, and 2 cysteins (CysB and CysA). The biosynthesis of 2-amino decanoic acid incorporated in gramillins could be initiated by a fatty acid synthase composed of the alpha and beta subunits FGSG_00036 and FGSG_11656. The cytochrome P450 monooxygenase FGSG_15680 could hydroxylate the fatty acid chain. Subsequent oxidation to the ketone by the oxidoreductase FGSG_00048 and transamination by aminotransferase FGSG_00049 could form 2-amino-decanoic acid. On the other hand, FGSG_15680 could also be responsible for the HO-modified glutamine at the gamma-position. Whether hydroxylation occurs on the fully assembled product or on the Gln residue prior to assembly into the gramillins requires further proof. The thioredoxin FGSG_00043 could also be required for the disulfide-bond formation between CysA and CysB. The specific involvement of the remaining proteins from the cluster is more difficult to discern, but could have broader regulatory (FGSG_00040 and FGSG_11657) or enzymatic functions (FGSG_00044 and FGSG_00045). The final C-domain of GRA1 does not possess the expected sequence of a termination CT domain, often implicated in macrocyclization and release of a cyclopeptidein fungal NRPs; and the thioesterase FGSG_00047 may act in concert with the terminal C-domain of GRA1 to catalyze the formation of the macrocyclic anhydride and release of the products. The polypeptide is AB hydrolase superfamily protein FGSG_00044 (Gibberella zeae (strain ATCC MYA-4620 / CBS 123657 / FGSC 9075 / NRRL 31084 / PH-1) (Wheat head blight fungus)).